Here is a 1979-residue protein sequence, read N- to C-terminus: MDDFAEGGLSLADDILLEDYPYEDDCICTPDFTTDDYVRVTQLYYEGVGMQYKDYAQSEKNLEYDICNIWCSKPLSILQDYCDAIKLYIFWPLLFQHQHSSIISRLHPCVEAIRSRAAEISLKKLQHLELMEDIVDLAKKVANDSFLIEGLLKIGYKIENKILAMEDALNWIKYTGDVTILPKLGSVDNCWPMLSIFFTEYKYHITRVVTENCNLLEEFRRHSCMQCVKQGELMKMRGNEEFSKEKFEIAVIYYTRAIEYRPENHLLYGNRALCFLRMGQFRNALSDGKRAIVLKNTWPKGHYRYCDALCMLGEYDWALQANIKAQKLCKNDPEGIKDLIQQHVKLQKQIEDLQGRTSNKNPIKAFYESRAYIPRNSSAPAFRTSLNFVETERGFRKTKYKMANGGDQNQKVADEALKGDDCDCHPEFLPPPSQPPRHKGKQKSRNNESEKPSFNSEVSLQVDLKSILEKQFSKSSRAAHQDFANIMKMLRSLIQDGYTALLEQRCRSAAQAFTELLNGLDPQKIKQLNLAMINYVLVVYGLAVSLLGIGRPEELSEAENQFKRIIEHYPNEGLDCLAYCGIGKVYLKKNRFLEALNHFEKAKTLISRLPGILTWPTSNVIIEESKPEKVKVMLEKFVEECKFPPVPDAVCCYQKCRGYSKIQIYLTDPDFKGFIRISCCQYCKVEFHMNCWKKLKTTTFNDKIDKDFLQGICLTPDCEGIISKIIIYSSGGQVKCEFEHKVIKEKVPSRPVLKQKCSSLEKLRLKEDKKLKRKIQKQEAKKLAQERMEEDLRESNPPKNEEPEETSDSAQRCQFLDDRILQCIKQNADKIKSVVLNTSTLLKELLSWKVLSTEDYTTCFSSKNFVHEAVDYVIGHLIQEKNRVKTRIFLHVLSELKELDPKLAPWIQRLNSFGLDAIGPFFTRYGASLKELDFHVVTVLWDEKYGHKLGSIEGKQLDYFFEPASAMEARCLIWLLEEHRDKFPALHSALDEFFDIMDSRCTVLRKQDSDEMPFGCIKVKNKGKKKKPKDSKPMLVGSGAASVAPSSEAVTPEDHSRRNSDSAGPFAVPDHLRQDVEEFEALYDQHSSEYVVRNKKLWDINPKQKCSTLYDYFSQLLEEHGPLDMSDRMFSEEYEFFPEETRQILEKAGGLKSFLLGCPRFVVIDNCIALKKVASRLKKKRKKKNMKAKVEDISKTGEYLRVKLPLNPTAREFQPDVKSEALSEDVKSIPGPADSSTLAAEDLKAQLDSDSSSGSASEDSRLEVASPDSPTPLCEDASPSPTPAPEEAKPTYWAQSHLVTGFCTYLPFQGFGITQRPAYINMVPSLSQFTSIYTPLANISSEYPMQRSMPVVPSFVASNRADENAAAYFESPNLNTEHDSGDHMASETQILEDTLGVCVRSQGSAADADPALSEPEGNSEHSGSSDSLWEASLENVSGTTDAPAAPSVAIQVSRSMVHQEVNTEPYEPFETQQGDLSQKEKECHLLREQLKVACENCEQIELRSSQEIKDLEEKLQRHTEENKISKTELDWFLQDLDREIKKWQQEKKEIQERLKALKKKIKKVINTSEMSAQKNDGFDKECEPHPDQSLGFSSALTDEKTKAEESVRKGKELYEESHQRAVAAEVSVLENWKEREVCKLQGVASQSEAYLKSLKLMSSDSATYPDVEYDILSWESFLSTVREEIESKKSQFEEHIKAIKNGSRLSDLSSVQLSEVSFPGCSTIHPQFLSESSGHEDPGLVACVDSMTGAVLNDPYMDSASGCPEEVPELSLGSPTHQPEVTQQLELKGASQVSPSEQSPEADEKLSGQATRSSQSPKKPSNSIIEHLSVIFPCYTSTELAGFIKKVRNKTKNSFSGLTIEEIVEKVTEHIVDEQKKKKPNPGKDKKTSEAHSAASVAKSSQSPPLAAAGPSARTKGQKKDDVPAPDGNSCEICHEIFKSKNMRVLKCGHKFHKGCFKQWLKGQSTCPTCGSSDLLSEE.

The segment at 1 to 230 (MDDFAEGGLS…RHSCMQCVKQ (230 aa)) is interaction with POLG. TPR repeat units follow at residues 231 to 264 (GELM…RPEN) and 266 to 298 (LLYG…KNTW). Serine 378 is modified (phosphoserine). The segment at 422-457 (CDCHPEFLPPPSQPPRHKGKQKSRNNESEKPSFNSE) is disordered. 2 TPR repeats span residues 536-572 (VLVV…YPNE) and 576-609 (CLAY…ISRL). The disordered stretch occupies residues 783–811 (LAQERMEEDLRESNPPKNEEPEETSDSAQ). Serine 1009 carries the post-translational modification Phosphoserine. Disordered regions lie at residues 1021 to 1067 (NKGK…GPFA), 1214 to 1289 (QPDV…EEAK), 1402 to 1427 (QGSA…SSDS), 1574 to 1601 (KNDG…DEKT), 1757 to 1776 (MDSA…GSPT), 1788 to 1821 (KGAS…KKPS), and 1873 to 1927 (DEQK…PAPD). Positions 1036–1050 (VGSGAASVAPSSEAV) are enriched in low complexity. At serine 1060 the chain carries Phosphoserine. Residues 1214 to 1227 (QPDVKSEALSEDVK) show a composition bias toward basic and acidic residues. A compositionally biased stretch (low complexity) spans 1248 to 1257 (DSDSSSGSAS). A compositionally biased stretch (basic and acidic residues) spans 1576 to 1586 (DGFDKECEPHP). Polar residues-rich tracts occupy residues 1788–1799 (KGASQVSPSEQS) and 1808–1821 (GQAT…KKPS). Serine 1794 is subject to Phosphoserine. Residues 1873 to 1890 (DEQKKKKPNPGKDKKTSE) show a composition bias toward basic and acidic residues. An RING-type; atypical zinc finger spans residues 1931-1971 (CEICHEIFKSKNMRVLKCGHKFHKGCFKQWLKGQSTCPTCG).

In terms of assembly, interacts (when phosphorylated on Ser-378) with AKT1, AKT2 and AKT3 (when phosphorylated). Interacts with CIT. Interacts with POLG. Interacts with HSP70. Interacts with SMURF2. Phosphorylation on Ser-378 by Akt is required for ubiquitin ligase activity. In terms of processing, proteolytically cleaved into differently sized N- and C-terminal fragments.

It is found in the nucleus. The protein resides in the cytoplasm. The protein localises to the golgi apparatus. The enzyme catalyses S-ubiquitinyl-[E2 ubiquitin-conjugating enzyme]-L-cysteine + [acceptor protein]-L-lysine = [E2 ubiquitin-conjugating enzyme]-L-cysteine + N(6)-ubiquitinyl-[acceptor protein]-L-lysine.. It participates in protein modification; protein ubiquitination. E3 ubiquitin-protein ligase which catalyzes the formation of 'Lys-48'-polyubiquitin chains. Mediates the ubiquitination and subsequent degradation of phosphorylated Akt (AKT1, AKT2 and AKT3) in the nucleus. Acts as a terminal regulator of Akt signaling after activation; its phosphorylation by Akt, which is a prerequisite for ubiquitin ligase activity, suggests the existence of a regulation mechanism required to control Akt levels after activation. Positively regulates TGFB1-induced epithelial-mesenchymal transition and myofibroblast differentiation by mediating the ubiquitination and subsequent degradation of SMURF2. Regulates neuronal differentiation by regulating actin remodeling and Golgi organization via a signaling cascade involving RHOA, CIT and ROCK. Inhibits cell proliferation. The sequence is that of E3 ubiquitin-protein ligase TTC3 (Ttc3) from Mus musculus (Mouse).